The chain runs to 145 residues: MTDIIRQLEAEQAAKIEEKRKLPDFQPGDTVRVQVRVTEGTRTRVQAYEGVCIARSGAGLNENFTVRKISYGEGVERVFPVYSPIVEGVELVRRGKVRRAKLYYLRGLTGKAARIAEKKDNRTKAEREADKAAAAKAEAAKAAAE.

Belongs to the bacterial ribosomal protein bL19 family.

Its function is as follows. This protein is located at the 30S-50S ribosomal subunit interface and may play a role in the structure and function of the aminoacyl-tRNA binding site. This is Large ribosomal subunit protein bL19 from Brucella anthropi (strain ATCC 49188 / DSM 6882 / CCUG 24695 / JCM 21032 / LMG 3331 / NBRC 15819 / NCTC 12168 / Alc 37) (Ochrobactrum anthropi).